A 368-amino-acid chain; its full sequence is MPNAIVAAEQYREIFLNQHPIMDVRAPIEFTRGAFPNSTNLPLMLDSEREKVGTCYKQSGQQAAIALGHSLVNGPIKQQRIEAWASYVKANPNAYLYCFRGGLRSQLSQQWLKEAGVEVPYIQGGYKAMRQYLIGVIEAAPAQQPLLSLSGMTGCGKTDFLLQRKEAVDLEGIANHRGSSFGKNIDPQSTQINFENQLAIALLQHQTSDAACLLLEDESFLIGRSALPQTFYNAMQAANVLVLEESDDARLERLRNEYVHKMYSGFCERLGPEAGFAAFSDYLLQSLVSIRKRLGGKQHQELQDLMQQALDQQINQNDTSLHLVWINLLLHKYYDPMYLYQLENKSERVLFKGSHQAMHEWLDSYQTR.

In terms of domain architecture, Rhodanese spans 15–138 (FLNQHPIMDV…MRQYLIGVIE (124 aa)). The active-site S-selanylcysteine intermediate is cysteine 98.

Belongs to the SelU family. Monomer.

It carries out the reaction 5-methylaminomethyl-2-thiouridine(34) in tRNA + selenophosphate + (2E)-geranyl diphosphate + H2O + H(+) = 5-methylaminomethyl-2-selenouridine(34) in tRNA + (2E)-thiogeraniol + phosphate + diphosphate. The catalysed reaction is 5-methylaminomethyl-2-thiouridine(34) in tRNA + (2E)-geranyl diphosphate = 5-methylaminomethyl-S-(2E)-geranyl-thiouridine(34) in tRNA + diphosphate. The enzyme catalyses 5-methylaminomethyl-S-(2E)-geranyl-thiouridine(34) in tRNA + selenophosphate + H(+) = 5-methylaminomethyl-2-(Se-phospho)selenouridine(34) in tRNA + (2E)-thiogeraniol. It catalyses the reaction 5-methylaminomethyl-2-(Se-phospho)selenouridine(34) in tRNA + H2O = 5-methylaminomethyl-2-selenouridine(34) in tRNA + phosphate. Involved in the post-transcriptional modification of the uridine at the wobble position (U34) of tRNA(Lys), tRNA(Glu) and tRNA(Gln). Catalyzes the conversion of 2-thiouridine (S2U-RNA) to 2-selenouridine (Se2U-RNA). Acts in a two-step process involving geranylation of 2-thiouridine (S2U) to S-geranyl-2-thiouridine (geS2U) and subsequent selenation of the latter derivative to 2-selenouridine (Se2U) in the tRNA chain. The protein is tRNA 2-selenouridine synthase of Shewanella baltica (strain OS155 / ATCC BAA-1091).